The chain runs to 60 residues: Large ribosomal subunit protein bL32 (60 aa).

A compositionally biased stretch (basic residues) spans methionine 1 to histidine 19. The disordered stretch occupies residues methionine 1–proline 24.

It belongs to the bacterial ribosomal protein bL32 family.

The protein is Large ribosomal subunit protein bL32 of Wolbachia pipientis wMel.